Reading from the N-terminus, the 484-residue chain is MERQVQRLRQTFRSGRSRPLRFRLQQLEALRRMVQEREKDILAAIAADLSKSELNAYSHEVITILGEIDFMLGNLPELASARPAKKNLLTMMDEAYVQPEPLGVVLIIGAWNYPFVLTLQPLVGAIAAGNAAIVKPSELSENTAKILAELLPQYLDQDLYMIVNGGVEETTELLRQRFDHILYTGNTAVGKIVMEAAAKHLTPVTLELGGKSPCYIDRDCDLDVACRRITWGKYMNCGQTCIAPDYILCEASSQDQIVQKIKDTVKDFYGENVKASPDYERIINLRHFKRIKSLLEGQKIAFGGETDEATRYIAPTILTDVDPNSKVMQEEIFGPILPIVSVKNVEEAINFINDREKPLALYIFSHNNKLIKRVIDETSSGGVTGNDVIMHFTVNSLPFGGVGASGMGAYHGKYSFDTFSHQRPCLLKGLKGESVNKLRYPPNSESKVSWSKFFLLKQFNKGRLQLLLLVCLVAVAAVIVKDQL.

The Cytoplasmic portion of the chain corresponds to 1–463 (MERQVQRLRQ…FLLKQFNKGR (463 aa)). NAD(+) is bound at residue 185–190 (GNTAVG). Catalysis depends on residues E207 and C241. S293 bears the Phosphoserine mark. Residues 464 to 484 (LQLLLLVCLVAVAAVIVKDQL) traverse the membrane as a helical segment. The Prevents secretion from ER signature appears at 481 to 484 (KDQL).

It belongs to the aldehyde dehydrogenase family. Homodimer. The N-terminus is blocked.

It is found in the microsome membrane. The protein resides in the endoplasmic reticulum membrane. The catalysed reaction is an aldehyde + NAD(+) + H2O = a carboxylate + NADH + 2 H(+). It catalyses the reaction a fatty aldehyde + NAD(+) + H2O = a fatty acid + NADH + 2 H(+). It carries out the reaction (2E)-hexadecenal + NAD(+) + H2O = (E)-hexadec-2-enoate + NADH + 2 H(+). The enzyme catalyses hexadecanoate + NADH + 2 H(+) = hexadecanal + NAD(+) + H2O. The catalysed reaction is 22-oxodocosanoate + NAD(+) + H2O = docosanedioate + NADH + 2 H(+). It catalyses the reaction 2,6,10,14-tetramethylpentadecanal + NAD(+) + H2O = 2,6,10,14-tetramethylpentadecanoate + NADH + 2 H(+). It carries out the reaction octadecanal + NAD(+) + H2O = octadecanoate + NADH + 2 H(+). The enzyme catalyses dodecanoate + NADH + 2 H(+) = dodecanal + NAD(+) + H2O. The catalysed reaction is decanal + NAD(+) + H2O = decanoate + NADH + 2 H(+). It catalyses the reaction tetradecanal + NAD(+) + H2O = tetradecanoate + NADH + 2 H(+). It carries out the reaction octanal + NAD(+) + H2O = octanoate + NADH + 2 H(+). The enzyme catalyses heptanal + NAD(+) + H2O = heptanoate + NADH + 2 H(+). The catalysed reaction is (2E,6E)-farnesal + NAD(+) + H2O = (2E,6E)-farnesoate + NADH + 2 H(+). Its function is as follows. Catalyzes the oxidation of medium and long-chain aliphatic aldehydes to fatty acids. Active on a variety of saturated and unsaturated aliphatic aldehydes between 6 and 24 carbons in length. Responsible for conversion of the sphingosine 1-phosphate (S1P) degradation product hexadecenal to hexadecenoic acid. This is Aldehyde dehydrogenase family 3 member A2 (Aldh3a2) from Rattus norvegicus (Rat).